We begin with the raw amino-acid sequence, 541 residues long: Carotenoid-cleaving dioxygenase, mitochondrial (541 aa).

Fe cation is bound by residues His-188, His-248, His-319, and His-535.

The protein belongs to the carotenoid oxygenase family. Requires Fe(2+) as cofactor. In terms of tissue distribution, widely expressed. Detected in heart, spleen, lung, intestine, colon, stomach, kidney, bladder, and prostate. Highly expressed in liver and testis (at protein level).

It localises to the mitochondrion. It catalyses the reaction all-trans-beta-carotene + O2 = beta-ionone + all-trans-10'-apo-beta-carotenal. It carries out the reaction 5-cis-lycopene + O2 = 5-cis-10'-apo-lycopenal + (3E,5E)-6,10-dimethylundeca-3,5,9-trien-2-one. The catalysed reaction is 13-cis-lycopene + O2 = 13-cis-10'-apo-lycopenal + (3E,5E)-6,10-dimethylundeca-3,5,9-trien-2-one. The enzyme catalyses lutein + O2 = (3R,6R)-hydroxy-alpha-ionone + (3R)-3-hydroxy-10'-apo-beta-carotenal. It catalyses the reaction lutein + O2 = (3R,6R)-3-hydroxy-10'-apo-alpha-carotenal + (3R)-hydroxy-beta-ionone. It carries out the reaction all-trans-zeaxanthin + 2 O2 = 4,9-dimethyldodeca-2,4,6,8,10-pentaenedial + 2 (3R)-hydroxy-beta-ionone. The catalysed reaction is all-trans-zeaxanthin + O2 = (3R)-3-hydroxy-10'-apo-beta-carotenal + (3R)-hydroxy-beta-ionone. The enzyme catalyses beta-cryptoxanthin + O2 = all-trans-10'-apo-beta-carotenal + (3R)-hydroxy-beta-ionone. It catalyses the reaction all-trans-10'-apo-beta-carotenal + O2 = beta-ionone + 4,9-dimethyldodeca-2,4,6,8,10-pentaenedial. It carries out the reaction (3R)-3-hydroxy-10'-apo-beta-carotenal + O2 = 4,9-dimethyldodeca-2,4,6,8,10-pentaenedial + (3R)-hydroxy-beta-ionone. The catalysed reaction is (3R,6R)-3-hydroxy-10'-apo-alpha-carotenal + O2 = (3R,6R)-hydroxy-alpha-ionone + 4,9-dimethyldodeca-2,4,6,8,10-pentaenedial. Its function is as follows. Broad specificity mitochondrial dioxygenase that mediates the asymmetric oxidative cleavage of carotenoids. Cleaves carotenes (pure hydrocarbon carotenoids) such as all-trans-beta-carotene and lycopene as well as xanthophylls (oxygenated carotenoids) such as zeaxanthin, lutein and beta-cryptoxanthin at both the 9,10 and the 9',10' carbon-carbon double bond. Through its function in carotenoids metabolism regulates oxidative stress and the production of important signaling molecules. This is Carotenoid-cleaving dioxygenase, mitochondrial from Mustela putorius furo (European domestic ferret).